The following is a 753-amino-acid chain: Nuclear hormone receptor family member daf-12 (753 aa).

Residues 1–109 (MGTNGGVIAE…PDDGLLDSSE (109 aa)) are disordered. The span at 20 to 29 (NPDKVEEPVV) shows a compositional bias: basic and acidic residues. The span at 30-44 (RRKRVTRRRHRRIHS) shows a compositional bias: basic residues. Residues 115–190 (QKTCRVCGDH…VGMKKEWILN (76 aa)) constitute a DNA-binding region (nuclear receptor). NR C4-type zinc fingers lie at residues 118–138 (CRVCGDHATGYNFNVITCESC) and 154–173 (CPYSEDCEINSVSRRFCQKC). The Nuclear localization signal signature appears at 191 to 206 (EEQLRRRKNSRLNNTG). Disordered stretches follow at residues 198–251 (KNSR…TINP), 266–314 (NAMP…GYDP), and 376–410 (GHPMPAETTPPYSAPMSDMSLSRHNSTSSGTEKNH). A compositionally biased stretch (polar residues) spans 201–211 (RLNNTGTCNKR). Residues 212–227 (SQPGNQQSPQGPNQQP) show a composition bias toward low complexity. Polar residues-rich tracts occupy residues 285 to 301 (PVGSSASDSPPNRSLTM) and 394 to 410 (MSLSRHNSTSSGTEKNH). In terms of domain architecture, NR LBD spans 516 to 753 (AELKALDAVR…ELPGEFFKIK (238 aa)).

Belongs to the nuclear hormone receptor family. Interacts with din-1 isoform d. Expressed throughout muscles of the pharynx. Expressed in epidermal seam cells, the vulva, head neurons, mature spermatheca, uterus and intestine.

The protein localises to the nucleus. Nuclear receptor which binds directly to response elements in target gene promoters. Activity is modulated by binding of steroid hormone ligands that include dafachronic acids. Regulates expression of genes involved in postembryonic development and the dauer diapause, in response to environmental cues. Inhibits the expression of let-7 family members when bound to corepressor din-1s which is an isoform of din-1. Plays a role in controlling the timing of seam cell development during the larval stages. Has a role in the immune response to bacterial infection, via regulation of let-7 miRNAs. Controls expression of genes that promote the aerobic catabolism of fatty acids for reproductive growth. May be involved in thermotolerance. In Caenorhabditis elegans, this protein is Nuclear hormone receptor family member daf-12.